The chain runs to 342 residues: S-adenosylmethionine:tRNA ribosyltransferase-isomerase (342 aa).

It belongs to the QueA family. As to quaternary structure, monomer.

The protein localises to the cytoplasm. It catalyses the reaction 7-aminomethyl-7-carbaguanosine(34) in tRNA + S-adenosyl-L-methionine = epoxyqueuosine(34) in tRNA + adenine + L-methionine + 2 H(+). The protein operates within tRNA modification; tRNA-queuosine biosynthesis. Transfers and isomerizes the ribose moiety from AdoMet to the 7-aminomethyl group of 7-deazaguanine (preQ1-tRNA) to give epoxyqueuosine (oQ-tRNA). This Campylobacter jejuni subsp. jejuni serotype O:23/36 (strain 81-176) protein is S-adenosylmethionine:tRNA ribosyltransferase-isomerase.